We begin with the raw amino-acid sequence, 301 residues long: Acetylglutamate kinase (301 aa).

Substrate is bound by residues 72–73, Arg94, and Asn199; that span reads GG.

It belongs to the acetylglutamate kinase family. ArgB subfamily.

The protein resides in the cytoplasm. The catalysed reaction is N-acetyl-L-glutamate + ATP = N-acetyl-L-glutamyl 5-phosphate + ADP. Its pathway is amino-acid biosynthesis; L-arginine biosynthesis; N(2)-acetyl-L-ornithine from L-glutamate: step 2/4. Its function is as follows. Catalyzes the ATP-dependent phosphorylation of N-acetyl-L-glutamate. This is Acetylglutamate kinase from Bartonella henselae (strain ATCC 49882 / DSM 28221 / CCUG 30454 / Houston 1) (Rochalimaea henselae).